Consider the following 417-residue polypeptide: Tryptophan decarboxylase (417 aa).

K263 carries the N6-(pyridoxal phosphate)lysine modification.

The protein belongs to the group II decarboxylase family. Pyridoxal 5'-phosphate is required as a cofactor.

The protein localises to the cytoplasm. It carries out the reaction L-tryptophan + H(+) = tryptamine + CO2. Inhibited by (S)-alpha-fluoromethyltryptophan. In terms of biological role, catalyzes the decarboxylation of tryptophan to tryptamine. Tryptamine is a neurotransmitter that induces the release of serotonin, which is suggested to modulate gastrointestinal motility. Therefore, the tryptophan decarboxylase from the gut bacteria Clostridium sporogenes (strain ATCC 15579) may influence host brain and behavior. Has weak activity with tyrosine. Activity against phenylalanine is undetectable. The chain is Tryptophan decarboxylase from Clostridium sporogenes (strain ATCC 15579).